We begin with the raw amino-acid sequence, 509 residues long: uncharacterized protein (509 aa).

The N-terminal stretch at Met-1–Ser-32 is a signal peptide.

It localises to the endoplasmic reticulum. This is an uncharacterized protein from Schizosaccharomyces pombe (strain 972 / ATCC 24843) (Fission yeast).